We begin with the raw amino-acid sequence, 266 residues long: Chymotrypsin-like elastase family member 1 (266 aa).

The first 16 residues, 1-16, serve as a signal peptide directing secretion; the sequence is MLRFLVFATLVLYGHS. Residues 17–26 constitute a propeptide, activation peptide; it reads TQDFPETNAR. The region spanning 27–264 is the Peptidase S1 domain; it reads VVGGTEAGRN…YISWINKTIA (238 aa). C56 and C72 are joined by a disulfide. Residue H71 is the Charge relay system of the active site. Residues D85, N87, Q90, and E95 each contribute to the Ca(2+) site. A glycan (N-linked (GlcNAc...) asparagine) is linked at N87. Catalysis depends on D119, which acts as the Charge relay system. 3 cysteine pairs are disulfide-bonded: C153–C220, C184–C200, and C210–C240. S214 (charge relay system) is an active-site residue. N-linked (GlcNAc...) asparagine glycans are attached at residues N241 and N260.

The protein belongs to the peptidase S1 family. Elastase subfamily. It depends on Ca(2+) as a cofactor.

The protein localises to the secreted. The catalysed reaction is Hydrolysis of proteins, including elastin. Preferential cleavage: Ala-|-Xaa.. Functionally, serine proteases that hydrolyze many proteins in addition to elastin. The protein is Chymotrypsin-like elastase family member 1 (CELA1) of Macaca fascicularis (Crab-eating macaque).